The primary structure comprises 515 residues: SWI/SNF-related matrix-associated actin-dependent regulator of chromatin subfamily D member 1 (515 aa).

The interval 1–103 (MAARAGFQSV…SGMDQSRKRP (103 aa)) is disordered. The span at 14-23 (GGAGASGGAG) shows a compositional bias: gly residues. The segment at 43–167 (APGQGLYRSP…DQTIMRKRLD (125 aa)) is interaction with ESR1, NR1H4, NR3C1, PGR and SMARCA4. Residues Arg68 and Arg88 each carry the asymmetric dimethylarginine modification. Lys101 is covalently cross-linked (Glycyl lysine isopeptide (Lys-Gly) (interchain with G-Cter in SUMO2)). Residues 168–474 (IQEALKRPIK…TMTDVVGNPE (307 aa)) form an interaction with SMARCC1 and SMARCC2 region. The necessary for GR/NR3C1-mediated remodeling and transcription from chromatin; required for GR/NR3C1 interaction with the BRG1/SMARCA4 complex in vivo stretch occupies residues 180-515 (RKLRIFISNT…LEQALGIRNT (336 aa)). At Thr203 the chain carries Phosphothreonine. Lys223 is subject to N6-acetyllysine. In terms of domain architecture, SWIB/MDM2 spans 290 to 367 (YQPPQFKLDP…PQRLHALLMP (78 aa)). Residues 412 to 440 (ASQQEIATLDNKIHETIETINQLKTQREF) adopt a coiled-coil conformation.

Belongs to the SMARCD family. In terms of assembly, component of the multiprotein chromatin-remodeling complexes SWI/SNF: SWI/SNF-A (BAF), SWI/SNF-B (PBAF) and related complexes. The canonical complex contains a catalytic subunit (either SMARCA4/BRG1/BAF190A or SMARCA2/BRM/BAF190B), and at least SMARCE1, ACTL6A/BAF53, SMARCC1/BAF155, SMARCC2/BAF170, and SMARCB1/SNF5/BAF47. Other subunits specific to each of the complexes may also be present permitting several possible combinations developmentally and tissue specific. Component of the BAF complex, which includes at least actin (ACTB), ARID1A/BAF250A, ARID1B/BAF250B, SMARCA2/BRM, SMARCA4/BRG1/BAF190A, ACTL6A/BAF53, ACTL6B/BAF53B, SMARCE1/BAF57, SMARCC1/BAF155, SMARCC2/BAF170, SMARCB1/SNF5/INI1, and one or more SMARCD1/BAF60A, SMARCD2/BAF60B, or SMARCD3/BAF60C. In muscle cells, the BAF complex also contains DPF3. Component of neural progenitors-specific chromatin remodeling complex (npBAF complex) composed of at least, ARID1A/BAF250A or ARID1B/BAF250B, SMARCD1/BAF60A, SMARCD3/BAF60C, SMARCA2/BRM/BAF190B, SMARCA4/BRG1/BAF190A, SMARCB1/BAF47, SMARCC1/BAF155, SMARCE1/BAF57, SMARCC2/BAF170, PHF10/BAF45A, ACTL6A/BAF53A and actin. Component of neuron-specific chromatin remodeling complex (nBAF complex) composed of at least, ARID1A/BAF250A or ARID1B/BAF250B, SMARCD1/BAF60A, SMARCD3/BAF60C, SMARCA2/BRM/BAF190B, SMARCA4/BRG1/BAF190A, SMARCB1/BAF47, SMARCC1/BAF155, SMARCE1/BAF57, SMARCC2/BAF170, DPF1/BAF45B, DPF3/BAF45C, ACTL6B/BAF53B and actin. Component of the SWI/SNF-B (PBAF) chromatin remodeling complex, at least composed of SMARCA4/BRG1, SMARCB1/BAF47/SNF5, ACTL6A/BAF53A or ACTL6B/BAF53B, SMARCE1/BAF57, SMARCD1/BAF60A, SMARCD2/BAF60B, perhaps SMARCD3/BAF60C, SMARCC1/BAF155, SMARCC2/BAF170, PBRM1/BAF180, ARID2/BAF200 and actin (ACTB). Component of SWI/SNF (GBAF) subcomplex, which includes at least BICRA or BICRAL (mutually exclusive), BRD9, SS18, SMARCA2/BRM, SMARCA4/BRG1/BAF190A, ACTL6A/BAF53, SMARCC1/BAF155, and SMARCD1/BAF60A. Specifically interacts with the VDR heterodimer complex. Interacts with ESR1, NR3C1, NR1H4, PGR, SMARCA4, SMARCC1 and SMARCC2. Interacts with DPF2. Interacts with DPF3a (isoform 2 of DPF3/BAF45C) and with HDGFL2 in a DPF3a-dependent manner. Interacts with FOS, FOSB isoform 1 and 2, FOSL1 and FOSL2. Expressed in all tissues tested, including brain, heart, kidney, liver, lung, muscle, pancreas and placenta.

The protein localises to the nucleus. Its function is as follows. Involved in transcriptional activation and repression of select genes by chromatin remodeling (alteration of DNA-nucleosome topology). Component of SWI/SNF chromatin remodeling complexes that carry out key enzymatic activities, changing chromatin structure by altering DNA-histone contacts within a nucleosome in an ATP-dependent manner. Belongs to the neural progenitors-specific chromatin remodeling complex (npBAF complex) and the neuron-specific chromatin remodeling complex (nBAF complex). During neural development a switch from a stem/progenitor to a postmitotic chromatin remodeling mechanism occurs as neurons exit the cell cycle and become committed to their adult state. The transition from proliferating neural stem/progenitor cells to postmitotic neurons requires a switch in subunit composition of the npBAF and nBAF complexes. As neural progenitors exit mitosis and differentiate into neurons, npBAF complexes which contain ACTL6A/BAF53A and PHF10/BAF45A, are exchanged for homologous alternative ACTL6B/BAF53B and DPF1/BAF45B or DPF3/BAF45C subunits in neuron-specific complexes (nBAF). The npBAF complex is essential for the self-renewal/proliferative capacity of the multipotent neural stem cells. The nBAF complex along with CREST plays a role regulating the activity of genes essential for dendrite growth. Has a strong influence on vitamin D-mediated transcriptional activity from an enhancer vitamin D receptor element (VDRE). May be a link between mammalian SWI-SNF-like chromatin remodeling complexes and the vitamin D receptor (VDR) heterodimer. Mediates critical interactions between nuclear receptors and the BRG1/SMARCA4 chromatin-remodeling complex for transactivation. Interacts with AKIRIN2. This Homo sapiens (Human) protein is SWI/SNF-related matrix-associated actin-dependent regulator of chromatin subfamily D member 1.